We begin with the raw amino-acid sequence, 448 residues long: Cytoplasmic tRNA 2-thiolation protein 2 (448 aa).

Belongs to the CTU2/NCS2 family.

The protein resides in the cytoplasm. The protein operates within tRNA modification; 5-methoxycarbonylmethyl-2-thiouridine-tRNA biosynthesis. Its function is as follows. Plays a central role in 2-thiolation of mcm(5)S(2)U at tRNA wobble positions of tRNA(Lys), tRNA(Glu) and tRNA(Gln). May act by forming a heterodimer with NCS6 that ligates sulfur from thiocarboxylated URM1 onto the uridine of tRNAs at wobble position. Prior mcm(5) tRNA modification by the elongator complex is required for 2-thiolation. May also be involved in protein urmylation. This is Cytoplasmic tRNA 2-thiolation protein 2 from Debaryomyces hansenii (strain ATCC 36239 / CBS 767 / BCRC 21394 / JCM 1990 / NBRC 0083 / IGC 2968) (Yeast).